We begin with the raw amino-acid sequence, 272 residues long: Testis-specific gene 13 protein (272 aa).

In Bos taurus (Bovine), this protein is Testis-specific gene 13 protein (TSGA13).